The chain runs to 122 residues: uncharacterized protein (122 aa).

This is an uncharacterized protein from Mycoplasma pneumoniae (strain ATCC 29342 / M129 / Subtype 1) (Mycoplasmoides pneumoniae).